Reading from the N-terminus, the 404-residue chain is Argininosuccinate synthase (404 aa).

ATP is bound by residues 10–18 and A38; that span reads AYSGGVDTS. An L-citrulline-binding site is contributed by Y89. ATP is bound at residue G119. Positions 121, 125, and 126 each coordinate L-aspartate. N125 is a binding site for L-citrulline. L-citrulline contacts are provided by R129, S177, S186, E262, and Y274.

The protein belongs to the argininosuccinate synthase family. Type 1 subfamily. As to quaternary structure, homotetramer.

It is found in the cytoplasm. The enzyme catalyses L-citrulline + L-aspartate + ATP = 2-(N(omega)-L-arginino)succinate + AMP + diphosphate + H(+). The protein operates within amino-acid biosynthesis; L-arginine biosynthesis; L-arginine from L-ornithine and carbamoyl phosphate: step 2/3. The sequence is that of Argininosuccinate synthase from Prochlorococcus marinus (strain MIT 9515).